The sequence spans 66 residues: Toxin Aah6 (66 aa).

The LCN-type CS-alpha/beta domain maps to 2 to 65 (RDGYVVKNGT…LYGDDGTYCS (64 aa)). An N-linked (GlcNAc...) asparagine glycan is attached at Asn-9. 4 disulfide bridges follow: Cys-13–Cys-64, Cys-17–Cys-40, Cys-26–Cys-45, and Cys-30–Cys-47.

This sequence belongs to the long (4 C-C) scorpion toxin superfamily. Sodium channel inhibitor family. Beta subfamily. Post-translationally, N-glycans are core-fucosylated, heterogeneous and short which could be the result of extensive trimming. Expressed by the venom gland.

The protein localises to the secreted. Beta toxins bind voltage-independently at site-4 of sodium channels and shift the voltage of activation toward more negative potentials thereby affecting sodium channel activation and promoting spontaneous and repetitive firing. This toxin is active only on insects. This toxin has very low anti-insect activity. The chain is Toxin Aah6 from Androctonus australis (Sahara scorpion).